The primary structure comprises 248 residues: Probable phosphatase Sfri_3709 (248 aa).

Positions 8, 10, 16, 41, 74, 102, 132, 193, and 195 each coordinate Zn(2+).

The protein belongs to the PHP family. It depends on Zn(2+) as a cofactor.

The sequence is that of Probable phosphatase Sfri_3709 from Shewanella frigidimarina (strain NCIMB 400).